The chain runs to 481 residues: 3-isopropylmalate dehydratase large subunit (481 aa).

[4Fe-4S] cluster contacts are provided by Cys-363, Cys-423, and Cys-426. The interval 434-465 (LRPGQRAASTSNRNFEGRQGRGGRTHLVSPPV) is disordered.

This sequence belongs to the aconitase/IPM isomerase family. LeuC type 1 subfamily. As to quaternary structure, heterodimer of LeuC and LeuD. It depends on [4Fe-4S] cluster as a cofactor.

It catalyses the reaction (2R,3S)-3-isopropylmalate = (2S)-2-isopropylmalate. It functions in the pathway amino-acid biosynthesis; L-leucine biosynthesis; L-leucine from 3-methyl-2-oxobutanoate: step 2/4. In terms of biological role, catalyzes the isomerization between 2-isopropylmalate and 3-isopropylmalate, via the formation of 2-isopropylmaleate. The polypeptide is 3-isopropylmalate dehydratase large subunit (Salinispora tropica (strain ATCC BAA-916 / DSM 44818 / JCM 13857 / NBRC 105044 / CNB-440)).